A 669-amino-acid chain; its full sequence is Armadillo repeat-containing protein gudu (669 aa).

Residues 1–10 (MIGTSSGTSH) show a composition bias toward polar residues. The tract at residues 1–53 (MIGTSSGTSHNRSRKKKEQCGSCPNRFSKDKRQVAAEDSDTTEVESSTDEEER) is disordered. Over residues 37 to 51 (EDSDTTEVESSTDEE) the composition is skewed to acidic residues. 10 ARM repeats span residues 100–139 (QINQ…DITL), 141–180 (IDIR…NVCK), 240–279 (KHNM…KCSS), 281–320 (PKFQ…KCAF), 322–365 (GTTR…MCAV), 367–406 (DANV…ECVR), 408–447 (QSNR…ECAE), 492–531 (DSAE…TIAQ), 574–613 (GNNT…KLSM), and 615–654 (PQNC…NIRE).

As to expression, highly expressed in testis.

Its function is as follows. Important for spermatogenesis where it may have a role in sperm individualization. In Drosophila melanogaster (Fruit fly), this protein is Armadillo repeat-containing protein gudu.